A 1468-amino-acid chain; its full sequence is DNA polymerase III PolC-type (1468 aa).

Residues 197–217 (QKSLEDSAPPSEEVTPTQNYD) form a disordered region. Residues 430–586 (YVVFDVETTG…YDAEATGRLL (157 aa)) form the Exonuclease domain.

The protein belongs to the DNA polymerase type-C family. PolC subfamily.

The protein localises to the cytoplasm. It carries out the reaction DNA(n) + a 2'-deoxyribonucleoside 5'-triphosphate = DNA(n+1) + diphosphate. Its function is as follows. Required for replicative DNA synthesis. This DNA polymerase also exhibits 3' to 5' exonuclease activity. The sequence is that of DNA polymerase III PolC-type from Streptococcus agalactiae serotype III (strain NEM316).